We begin with the raw amino-acid sequence, 150 residues long: MSGKILDKMAGLLGLEDDLEEDLEEVEEETAEEEVTPLISSNTKRNNKVVSIHTAVSAKVKIIKPCSYEEAVDICDELKNRKIIIVNTTDLETKIAQRLLDFMGGASYALGGSLEEVEKSVYILAPSTVEVTNELKSQLISSKGIFNWNK.

This sequence belongs to the SepF family. As to quaternary structure, homodimer. Interacts with FtsZ.

It localises to the cytoplasm. Cell division protein that is part of the divisome complex and is recruited early to the Z-ring. Probably stimulates Z-ring formation, perhaps through the cross-linking of FtsZ protofilaments. Its function overlaps with FtsA. This is Cell division protein SepF from Clostridium botulinum (strain ATCC 19397 / Type A).